A 221-amino-acid chain; its full sequence is Ribonuclease T (221 aa).

The region spanning 20-196 (VVVDLETGGF…YDTERTAELF (177 aa)) is the Exonuclease domain. Mg(2+) is bound by residues aspartate 23, glutamate 25, histidine 183, and aspartate 188. The Proton donor/acceptor role is filled by histidine 183.

The protein belongs to the RNase T family. In terms of assembly, homodimer. It depends on Mg(2+) as a cofactor.

Its function is as follows. Trims short 3' overhangs of a variety of RNA species, leaving a one or two nucleotide 3' overhang. Responsible for the end-turnover of tRNA: specifically removes the terminal AMP residue from uncharged tRNA (tRNA-C-C-A). Also appears to be involved in tRNA biosynthesis. The polypeptide is Ribonuclease T (Chromohalobacter salexigens (strain ATCC BAA-138 / DSM 3043 / CIP 106854 / NCIMB 13768 / 1H11)).